The following is a 252-amino-acid chain: Protein IRON-RELATED TRANSCRIPTION FACTOR 3 (252 aa).

The basic motif stretch occupies residues 36–49 (PRKVHKSEREKLKR). Residues 36 to 86 (PRKVHKSEREKLKRGHLNDLFGELGNMLEADRQSNGKACILTDTTRILRDL) enclose the bHLH domain. The segment at 50-86 (GHLNDLFGELGNMLEADRQSNGKACILTDTTRILRDL) is helix-loop-helix motif. Positions 76–131 (LTDTTRILRDLLSQVKSLRQENSTLQNESNYVTMERNELQDENGALRSEISDLQNE) form a coiled coil. The disordered stretch occupies residues 135–252 (RATGSPGWGH…GLPRMEDEQM (118 aa)). The segment covering 162–176 (PSQQPMQPSPMTTST) has biased composition (low complexity). Acidic residues predominate over residues 208-219 (PAEDPEPSEDQE).

The protein belongs to the bHLH protein family.

The protein resides in the nucleus. Transcription factor that acts as a negative regulator of the iron deficiency response. Suppresses the induction of iron deficiency responsive genes, such as NAS1, NAS2, IRO2, IRT1, YSL15, and NRAMP1. This is Protein IRON-RELATED TRANSCRIPTION FACTOR 3 from Oryza sativa subsp. japonica (Rice).